The chain runs to 421 residues: Histidine--tRNA ligase (421 aa).

This sequence belongs to the class-II aminoacyl-tRNA synthetase family. Homodimer.

The protein resides in the cytoplasm. It carries out the reaction tRNA(His) + L-histidine + ATP = L-histidyl-tRNA(His) + AMP + diphosphate + H(+). The sequence is that of Histidine--tRNA ligase from Caldicellulosiruptor bescii (strain ATCC BAA-1888 / DSM 6725 / KCTC 15123 / Z-1320) (Anaerocellum thermophilum).